The following is a 336-amino-acid chain: Syntaxin-31 (336 aa).

Residues 1–314 lie on the Cytoplasmic side of the membrane; sequence MGSTFRDRTV…QHLTRISSNR (314 aa). 2 disordered regions span residues 23–53 and 152–218; these read GAIP…KASR and RSEN…SQLR. Positions 154 to 163 are enriched in basic and acidic residues; it reads ENMKAHENRK. The segment covering 164 to 181 has biased composition (polar residues); the sequence is QLFSTKNAVDSPPQNNAK. Positions 190–202 are enriched in low complexity; sequence SSSSNPFGNLQQP. The region spanning 244–306 is the t-SNARE coiled-coil homology domain; the sequence is ENYSQSRAVA…EGARSALLQH (63 aa). The helical; Anchor for type IV membrane protein transmembrane segment at 315-335 threads the bilayer; sequence WLMMKIFAVIILFLIVFLFFV. A topological domain (vesicular) is located at residue Ala336.

The protein belongs to the syntaxin family. Part of the t-SNARE complex. Interacts with CDC48A, but not with VPS45.

Its subcellular location is the golgi apparatus. The protein localises to the cis-Golgi network membrane. The protein resides in the cytoplasm. It is found in the endosome. Vesicle trafficking protein that functions in the secretory pathway. In Arabidopsis thaliana (Mouse-ear cress), this protein is Syntaxin-31 (SYP31).